The sequence spans 250 residues: Transmembrane ascorbate-dependent reductase CYB561 (250 aa).

M1 bears the N-acetylmethionine mark. Residues 1-15 (MEHSSASVPAALPYY) are Cytoplasmic-facing. The helical transmembrane segment at 16-36 (VAFSQLLGLTVVAVTGAWLGL) threads the bilayer. The 202-residue stretch at 18–219 (FSQLLGLTVV…FGVVVLYILA (202 aa)) folds into the Cytochrome b561 domain. The Vesicular segment spans residues 37 to 50 (YRGGIAWESSLQFN). A helical membrane pass occupies residues 51 to 71 (VHPLCMVIGMIFLQGDALLVY). H52, R72, and K79 together coordinate heme b. At 72 to 83 (RVFRREAKRTTK) the chain is on the cytoplasmic side. The L-ascorbate site is built by K79 and K83. Residues 84–104 (ILHGLLHVFAFIIALVGLVAV) form a helical membrane-spanning segment. Residues H86, 115-118 (DLYS), and H120 each bind heme b. Topologically, residues 105–123 (FDYHKKKGYADLYSLHSWC) are vesicular. A helical transmembrane segment spans residues 124 to 144 (GILVFVLYFVQWLVGFSFFLF). Topologically, residues 145-157 (PGASFSLRSRYRP) are cytoplasmic. R152 serves as a coordination point for L-ascorbate. The helical transmembrane segment at 158–178 (QHIFFGATIFLFSVGTALLGL) threads the bilayer. Heme b-binding residues include H159 and E180. The Vesicular segment spans residues 179–197 (KEALLFKLGSKYSTFEPEG). A helical transmembrane segment spans residues 198–218 (VLANVLGLLLVCFGVVVLYIL). Residues 219–250 (AQADWKRPSQAEEQALSMDFKTLTEGDSPSPQ) are Cytoplasmic-facing. Position 224 (K224) interacts with heme b. Residues S246 and S248 each carry the phosphoserine modification.

Heme b is required as a cofactor. In terms of tissue distribution, abundantly distributed in a number of neuroendocrine tissues.

It is found in the cytoplasmic vesicle. It localises to the secretory vesicle. The protein localises to the chromaffin granule membrane. The catalysed reaction is monodehydro-L-ascorbate radical(out) + L-ascorbate(in) = monodehydro-L-ascorbate radical(in) + L-ascorbate(out). In terms of biological role, transmembrane reductase that uses ascorbate as an electron donor in the cytoplasm and transfers electrons across membranes to reduce monodehydro-L-ascorbate radical in the lumen of secretory vesicles. It is therefore involved the regeneration and homeostasis within secretory vesicles of ascorbate which in turn provides reducing equivalents needed to support the activity of intravesicular enzymes. The sequence is that of Transmembrane ascorbate-dependent reductase CYB561 from Mus musculus (Mouse).